The primary structure comprises 303 residues: Elongation factor Ts (303 aa).

Positions 79–82 (TDFT) are involved in Mg(2+) ion dislocation from EF-Tu.

It belongs to the EF-Ts family.

It localises to the cytoplasm. Its function is as follows. Associates with the EF-Tu.GDP complex and induces the exchange of GDP to GTP. It remains bound to the aminoacyl-tRNA.EF-Tu.GTP complex up to the GTP hydrolysis stage on the ribosome. This chain is Elongation factor Ts, found in Magnetococcus marinus (strain ATCC BAA-1437 / JCM 17883 / MC-1).